Here is a 306-residue protein sequence, read N- to C-terminus: Tyrosine--tRNA ligase (306 aa).

Residues Tyr-32 and Glu-36 each contribute to the L-tyrosine site. The 'HIGH' region signature appears at 37-45; it reads PSGKIHLGH. Positions 151 to 158 are tyrosine; the sequence is YPIMQVND. Gln-173 serves as a coordination point for L-tyrosine. Positions 204 to 208 match the 'KMSKS' region motif; the sequence is KMSSS. Position 207 (Ser-207) interacts with ATP. 2 interaction with t-RNA regions span residues 228–231 and 283–288; these read KAYC and HPMDLK.

This sequence belongs to the class-I aminoacyl-tRNA synthetase family. TyrS type 3 subfamily. Homodimer.

It localises to the cytoplasm. The catalysed reaction is tRNA(Tyr) + L-tyrosine + ATP = L-tyrosyl-tRNA(Tyr) + AMP + diphosphate + H(+). In terms of biological role, catalyzes the attachment of tyrosine to tRNA(Tyr) in a two-step reaction: tyrosine is first activated by ATP to form Tyr-AMP and then transferred to the acceptor end of tRNA(Tyr). This is Tyrosine--tRNA ligase (tyrS) from Methanocaldococcus jannaschii (strain ATCC 43067 / DSM 2661 / JAL-1 / JCM 10045 / NBRC 100440) (Methanococcus jannaschii).